A 467-amino-acid polypeptide reads, in one-letter code: Dihydrolipoyl dehydrogenase 3 (467 aa).

Residues 34–43 (EGRETLGGTC), Lys52, and Ala116 each bind FAD. Cysteines 43 and 48 form a disulfide. NAD(+) is bound by residues 182-186 (GAGVI), Glu205, Val239, and 272-275 (AIGR). FAD is bound by residues Asp314 and Ala322. The active-site Proton acceptor is the His446.

This sequence belongs to the class-I pyridine nucleotide-disulfide oxidoreductase family. Homodimer. It depends on FAD as a cofactor.

It localises to the cytoplasm. The catalysed reaction is N(6)-[(R)-dihydrolipoyl]-L-lysyl-[protein] + NAD(+) = N(6)-[(R)-lipoyl]-L-lysyl-[protein] + NADH + H(+). In terms of biological role, LPD-3 may substitute for lipoamide dehydrogenase of the 2-oxoglutarate dehydrogenase and pyruvate multienzyme complexes when the latter is inactive or missing. This is Dihydrolipoyl dehydrogenase 3 (lpd3) from Pseudomonas aeruginosa (strain ATCC 15692 / DSM 22644 / CIP 104116 / JCM 14847 / LMG 12228 / 1C / PRS 101 / PAO1).